The primary structure comprises 78 residues: D-alanyl carrier protein (78 aa).

The Carrier domain occupies 1–78 (MAFRENVLEI…MIITQLEALK (78 aa)). Position 36 is an O-(pantetheine 4'-phosphoryl)serine (Ser36).

Belongs to the DltC family. 4'-phosphopantetheine is transferred from CoA to a specific serine of apo-DCP.

It is found in the cytoplasm. Its pathway is cell wall biogenesis; lipoteichoic acid biosynthesis. Functionally, carrier protein involved in the D-alanylation of lipoteichoic acid (LTA). The loading of thioester-linked D-alanine onto DltC is catalyzed by D-alanine--D-alanyl carrier protein ligase DltA. The DltC-carried D-alanyl group is further transferred to cell membrane phosphatidylglycerol (PG) by forming an ester bond, probably catalyzed by DltD. D-alanylation of LTA plays an important role in modulating the properties of the cell wall in Gram-positive bacteria, influencing the net charge of the cell wall. The chain is D-alanyl carrier protein from Listeria monocytogenes serotype 4a (strain HCC23).